Reading from the N-terminus, the 100-residue chain is NADH-quinone oxidoreductase subunit K (100 aa).

3 helical membrane passes run 4–24 (TSYYVLLSAILFTIGVLGVLL), 29–49 (IVIFMSVELMLNAANLALVAF), and 61–81 (IVFFVITVAAAEVAVGLALLV).

The protein belongs to the complex I subunit 4L family. As to quaternary structure, NDH-1 is composed of 14 different subunits. Subunits NuoA, H, J, K, L, M, N constitute the membrane sector of the complex.

Its subcellular location is the cell membrane. The enzyme catalyses a quinone + NADH + 5 H(+)(in) = a quinol + NAD(+) + 4 H(+)(out). In terms of biological role, NDH-1 shuttles electrons from NADH, via FMN and iron-sulfur (Fe-S) centers, to quinones in the respiratory chain. The immediate electron acceptor for the enzyme in this species is believed to be ubiquinone. Couples the redox reaction to proton translocation (for every two electrons transferred, four hydrogen ions are translocated across the cytoplasmic membrane), and thus conserves the redox energy in a proton gradient. This is NADH-quinone oxidoreductase subunit K from Chloroflexus aggregans (strain MD-66 / DSM 9485).